The following is a 245-amino-acid chain: Probable phosphatase YPTB2019 (245 aa).

The Zn(2+) site is built by histidine 7, histidine 9, histidine 15, histidine 40, glutamate 73, histidine 101, histidine 131, aspartate 192, and histidine 194.

It belongs to the PHP family. Homotrimer. It depends on Zn(2+) as a cofactor.

This chain is Probable phosphatase YPTB2019, found in Yersinia pseudotuberculosis serotype I (strain IP32953).